A 285-amino-acid chain; its full sequence is MAKLSQNWKKLSSKIQDKPKNGSVKKPTLKGKISKKVKASISEKLSTTNNTTTTTTTTTSTTDVVPIASSTKPTATPLEYTLWTQNHTINVSHIPKTPKPLPLSRNDSRKLDPGKYVAIDCEFVGIGKDGEESALARISIINYYGVVLLDTYVRPQERVTDWRTWVSGIQSYHMQDAIDFKTAQLKTMELINNKILVGHAVNNDLDILFLSHPKSMIRDTCKFPKFREIAGGKSPSLKKLIKHFIQVDIQIGQHSSVEDARATMLLFRLFKREIEQSMRNRNKRQ.

The span at 1–14 (MAKLSQNWKKLSSK) shows a compositional bias: polar residues. A disordered region spans residues 1–35 (MAKLSQNWKKLSSKIQDKPKNGSVKKPTLKGKISK). Residues 116 to 267 (YVAIDCEFVG…EDARATMLLF (152 aa)) form the Exonuclease domain.

This sequence belongs to the REXO4 family.

The protein resides in the nucleus. In terms of biological role, exoribonuclease involved in ribosome biosynthesis. Involved in the processing of ITS1, the internal transcribed spacer localized between the 18S and 5.8S rRNAs. This chain is RNA exonuclease 4 (REX4), found in Candida albicans (strain SC5314 / ATCC MYA-2876) (Yeast).